Reading from the N-terminus, the 188-residue chain is Proline-rich protein 3 (188 aa).

The tract at residues 1 to 157 (MPKRKKQNQH…DPQVMEDKSD (157 aa)) is disordered. Composition is skewed to pro residues over residues 35 to 46 (IGPPSLLGPPPM) and 69 to 82 (LIPPLLSLPPPPWG). A compositionally biased stretch (low complexity) spans 83-96 (RGPIRRGLGPRSSP). Basic and acidic residues predominate over residues 145–157 (PKDDPQVMEDKSD). A C3H1-type zinc finger spans residues 155 to 183 (KSDRPVCRHFAKKGHCRYEDLCAFYHPGV).

The protein is Proline-rich protein 3 (PRR3) of Pan troglodytes (Chimpanzee).